A 946-amino-acid polypeptide reads, in one-letter code: DNA primase (946 aa).

The disordered stretch occupies residues 596 to 626 (RDTEEDEDGKEDKNNVPDNGVFQKTTSSVDT). The segment covering 617 to 626 (FQKTTSSVDT) has biased composition (polar residues). A CHC2-type zinc finger spans residues 881–920 (CLNYTHRNPQETVQVFIDLRTEHSYALWASLWSRCFTKKC).

The protein belongs to the herpesviridae DNA primase family. In terms of assembly, associates with the helicase and the primase-associated factor to form the helicase-primase factor.

The protein localises to the host nucleus. Its function is as follows. Essential component of the helicase/primase complex. Unwinds the DNA at the replication forks and generates single-stranded DNA for both leading and lagging strand synthesis. The primase initiates primer synthesis and thereby produces large amount of short RNA primers on the lagging strand that the polymerase elongates using dNTPs. The sequence is that of DNA primase (UL70) from Human cytomegalovirus (strain AD169) (HHV-5).